The following is a 985-amino-acid chain: Regulator of telomere elongation helicase 1 homolog (985 aa).

Residues 7–303 (AGIPVHFPFE…QDMAGDEPKD (297 aa)) form the Helicase ATP-binding domain. 42 to 49 (SPTGTGKT) provides a ligand contact to ATP. [4Fe-4S] cluster contacts are provided by Cys-146, Cys-164, Cys-173, and Cys-209. The DEAH box signature appears at 252–255 (DEAH). Residues 863–883 (VKIHKRERSSPTAPESSSQVT) are disordered. A compositionally biased stretch (polar residues) spans 872 to 882 (SPTAPESSSQV). Thr-874 carries the post-translational modification Phosphothreonine.

Belongs to the helicase family. RAD3/XPD subfamily. In terms of tissue distribution, expressed in both male germline and somatic cells (at protein level). Expressed in ovarian germline stem cells (at protein level). Expressed in adult testes (at protein level). Expressed in the germarium including germline stem cells.

Its subcellular location is the nucleus. It is found in the chromosome. It catalyses the reaction ATP + H2O = ADP + phosphate + H(+). In terms of biological role, a probable ATP-dependent DNA helicase implicated in DNA repair and the maintenance of genomic stability. Acts as an anti-recombinase to counteract toxic recombination and limit crossover during meiosis. Regulates meiotic recombination and crossover homeostasis by physically dissociating strand invasion events and thereby promotes noncrossover repair by meiotic synthesis dependent strand annealing (SDSA) as well as disassembly of D loop recombination intermediates. In male germline stem cells (GSCs), plays a role in GSCs maintenance during larval germline development by modulating the expression of genes such as Stat92E and preventing DNA damage-induced checkpoint activation. May play a role in female germline stem cell maintenance. This is Regulator of telomere elongation helicase 1 homolog from Drosophila melanogaster (Fruit fly).